The primary structure comprises 272 residues: R-spondin-3 (272 aa).

Positions 1-21 (MHLRLISWLFIILNFMEYIGS) are cleaved as a signal peptide. FU repeat units lie at residues 35 to 86 (PNVS…GYYG) and 92 to 135 (INKC…GLEA). The N-linked (GlcNAc...) asparagine glycan is linked to Asn-36. 11 disulfides stabilise this stretch: Cys-41–Cys-48, Cys-45–Cys-54, Cys-57–Cys-76, Cys-80–Cys-95, Cys-98–Cys-105, Cys-102–Cys-111, Cys-114–Cys-125, Cys-129–Cys-142, Cys-148–Cys-190, Cys-159–Cys-166, and Cys-199–Cys-206. The region spanning 147-207 (HCEVSEWNPW…KCTVQRKKCQ (61 aa)) is the TSP type-1 domain. The tract at residues 201–272 (VQRKKCQKGE…QKSVSVSTVH (72 aa)) is disordered. Basic residues predominate over residues 213–223 (KKGRERKRKKP). The span at 224–252 (NKGESKEAIPDSKSLESSKEIPEQRENKQ) shows a compositional bias: basic and acidic residues.

Belongs to the R-spondin family. Interacts with the extracellular domain of FZD8 and LRP6. It however does not form a ternary complex with FZD8 and LRP6. Interacts with WNT1. Binds heparin. Interacts with LGR4, LGR5 and LGR6. Ubiquitously expressed. Expressed at higher level in placenta, small intestine, fetal thymus and lymph node. Highly expressed in endothelial cells.

It is found in the secreted. Its function is as follows. Activator of the canonical Wnt signaling pathway by acting as a ligand for LGR4-6 receptors, which acts as a key regulator of angiogenesis. Upon binding to LGR4-6 (LGR4, LGR5 or LGR6), LGR4-6 associate with phosphorylated LRP6 and frizzled receptors that are activated by extracellular Wnt receptors, triggering the canonical Wnt signaling pathway to increase expression of target genes. Also regulates the canonical Wnt/beta-catenin-dependent pathway and non-canonical Wnt signaling by acting as an inhibitor of ZNRF3, an important regulator of the Wnt signaling pathway. Acts as a ligand for frizzled FZD8 and LRP6. May negatively regulate the TGF-beta pathway. Acts as a key regulator of angiogenesis by controlling vascular stability and pruning: acts by activating the non-canonical Wnt signaling pathway in endothelial cells. Can also amplify Wnt signaling pathway independently of LGR4-6 receptors, possibly by acting as a direct antagonistic ligand to RNF43 and ZNRF3. This is R-spondin-3 (RSPO3) from Homo sapiens (Human).